A 96-amino-acid chain; its full sequence is Small ribosomal subunit protein bS6 (96 aa).

This sequence belongs to the bacterial ribosomal protein bS6 family.

In terms of biological role, binds together with bS18 to 16S ribosomal RNA. The protein is Small ribosomal subunit protein bS6 (rpsF) of Streptomyces coelicolor (strain ATCC BAA-471 / A3(2) / M145).